A 292-amino-acid polypeptide reads, in one-letter code: GTP cyclohydrolase FolE2 (292 aa).

The protein belongs to the GTP cyclohydrolase IV family.

The enzyme catalyses GTP + H2O = 7,8-dihydroneopterin 3'-triphosphate + formate + H(+). It participates in cofactor biosynthesis; 7,8-dihydroneopterin triphosphate biosynthesis; 7,8-dihydroneopterin triphosphate from GTP: step 1/1. In terms of biological role, converts GTP to 7,8-dihydroneopterin triphosphate. This chain is GTP cyclohydrolase FolE2, found in Staphylococcus aureus (strain Mu50 / ATCC 700699).